The primary structure comprises 774 residues: Beta-D-xylosidase 1 (774 aa).

The first 30 residues, 1–30 (MSCYNKALLIGNKVVVILVFLLCLVHSSES), serve as a signal peptide directing secretion. Residue N131 is glycosylated (N-linked (GlcNAc...) asparagine). The active site involves D296. A glycan (N-linked (GlcNAc...) asparagine) is linked at N658.

Belongs to the glycosyl hydrolase 3 family. As to expression, expressed in leaves, stems, seedlings, roots, inflorescences, siliques and developing seeds. Expressed in the vasculature of the roots, leaves, flowers and silique. Expressed in tissues undergoing secondary cell wall thickening such as protoxylem, metaxylem, intrafascicular cambium and fibers.

The protein localises to the secreted. The protein resides in the extracellular space. Its subcellular location is the extracellular matrix. The enzyme catalyses Hydrolysis of terminal non-reducing alpha-L-arabinofuranoside residues in alpha-L-arabinosides.. Its function is as follows. Involved in pectic arabinan modification in mucilage secretory cells. Also acts as a beta-D-xylosidase during the remodeling of xylans in vascular development. The polypeptide is Beta-D-xylosidase 1 (BXL1) (Arabidopsis thaliana (Mouse-ear cress)).